The primary structure comprises 256 residues: Type III pantothenate kinase (256 aa).

6-13 (DIGNTHTV) contributes to the ATP binding site. Substrate-binding positions include Tyr-100 and 107 to 110 (GADR). Asp-109 (proton acceptor) is an active-site residue. Asp-129 is a K(+) binding site. Thr-132 lines the ATP pocket. Position 184 (Thr-184) interacts with substrate.

Belongs to the type III pantothenate kinase family. In terms of assembly, homodimer. Requires NH4(+) as cofactor. The cofactor is K(+).

It is found in the cytoplasm. It catalyses the reaction (R)-pantothenate + ATP = (R)-4'-phosphopantothenate + ADP + H(+). It participates in cofactor biosynthesis; coenzyme A biosynthesis; CoA from (R)-pantothenate: step 1/5. Functionally, catalyzes the phosphorylation of pantothenate (Pan), the first step in CoA biosynthesis. This is Type III pantothenate kinase from Acidothermus cellulolyticus (strain ATCC 43068 / DSM 8971 / 11B).